We begin with the raw amino-acid sequence, 475 residues long: UDP-N-acetylmuramate--L-alanine ligase (475 aa).

112–118 serves as a coordination point for ATP; it reads GTHGKTT.

It belongs to the MurCDEF family.

The protein resides in the cytoplasm. The catalysed reaction is UDP-N-acetyl-alpha-D-muramate + L-alanine + ATP = UDP-N-acetyl-alpha-D-muramoyl-L-alanine + ADP + phosphate + H(+). It functions in the pathway cell wall biogenesis; peptidoglycan biosynthesis. Cell wall formation. This chain is UDP-N-acetylmuramate--L-alanine ligase, found in Cupriavidus pinatubonensis (strain JMP 134 / LMG 1197) (Cupriavidus necator (strain JMP 134)).